The sequence spans 244 residues: Protein-lysine methyltransferase METTL21E (244 aa).

Residues 1–20 form a disordered region; it reads MDLTVTHITHKETYKEPRDD. The segment covering 9–18 has biased composition (basic and acidic residues); it reads THKETYKEPR. Residues tryptophan 69, 97-99, aspartate 118, tryptophan 149, and alanine 170 contribute to the S-adenosyl-L-methionine site; that span reads GAG.

It belongs to the methyltransferase superfamily. METTL21 family.

In terms of biological role, protein-lysine methyltransferase. This Mus musculus (Mouse) protein is Protein-lysine methyltransferase METTL21E (Mettl21e).